A 127-amino-acid chain; its full sequence is Phospholipase A2 homolog otoconin-22 (127 aa).

Asn-20 carries an N-linked (GlcNAc...) asparagine glycan. Intrachain disulfides connect Cys-26–Cys-120, Cys-28–Cys-44, Cys-43–Cys-99, Cys-49–Cys-127, Cys-50–Cys-92, Cys-59–Cys-85, and Cys-78–Cys-90. A glycan (N-linked (GlcNAc...) asparagine) is linked at Asn-113.

The protein belongs to the phospholipase A2 family. Monomer. As to expression, otoconial membrane in the maculae of the saccule and utricle. Otoconia are composites of proteins and inorganic crystals formed in the peripheral portion of the vestibular system of vertebrates. The otoconial membranes contain small crystals of calcium carbonate known as otoliths (ear stones) if there is a single deposit or as otoconia (ear dust) if there are many. Each mineral polymorph of otoconia has a protein unique to that polymorph.

It is found in the secreted. In terms of biological role, major protein of the aragonitic otoconia. It is unlikely that this protein has phospholipase A2 activity. The polypeptide is Phospholipase A2 homolog otoconin-22 (Xenopus laevis (African clawed frog)).